A 319-amino-acid polypeptide reads, in one-letter code: F-box only protein 8 (319 aa).

One can recognise an F-box domain in the interval 68 to 111 (FINLEMLPPELSFTILSYLNATDLCLASCVWQDLANDELLWQGL). The 131-residue stretch at 146-276 (FNANPDEGVN…LILLSIDLTS (131 aa)) folds into the SEC7 domain.

Functionally, may promote guanine-nucleotide exchange on an ARF. Promotes the activation of ARF through replacement of GDP with GTP (Potential). This Bos taurus (Bovine) protein is F-box only protein 8 (FBXO8).